We begin with the raw amino-acid sequence, 81 residues long: Small ribosomal subunit protein bS16 (81 aa).

Belongs to the bacterial ribosomal protein bS16 family.

This is Small ribosomal subunit protein bS16 from Treponema denticola (strain ATCC 35405 / DSM 14222 / CIP 103919 / JCM 8153 / KCTC 15104).